The following is a 397-amino-acid chain: P-selectin glycoprotein ligand 1 (397 aa).

The first 17 residues, Met-1 to Ser-17, serve as a signal peptide directing secretion. A propeptide spanning residues Leu-18–Arg-41 is cleaved from the precursor. Topologically, residues Leu-18–Cys-307 are extracellular. At Tyr-54 the chain carries Sulfotyrosine. An O-linked (GalNAc...) threonine glycan is attached at Thr-58. An N-linked (GlcNAc...) asparagine glycan is attached at Asn-66. The segment at Thr-89–Asn-261 is disordered. Residues Ser-120–Ala-198 are compositionally biased toward polar residues. A run of 10 repeats spans residues Gln-126–Val-135, Gln-136–Ser-145, Gln-146–Ser-155, Gln-156–Ser-165, Gln-166–Ser-175, Gln-176–Ser-185, Gln-186–Ser-195, Gln-196–Ser-205, Lys-206–Ser-215, and Lys-216–Thr-225. The tract at residues Gln-126 to Thr-225 is 10 X 10 AA tandem repeats. Residues Leu-236–Asn-261 are compositionally biased toward polar residues. N-linked (GlcNAc...) asparagine glycosylation occurs at Asn-261. A helical transmembrane segment spans residues Leu-308–Leu-328. The Cytoplasmic portion of the chain corresponds to Ala-329–Pro-397. Positions Pro-364–Leu-390 are disordered. A compositionally biased stretch (basic and acidic residues) spans Gln-375–Leu-390. A Phosphothreonine modification is found at Thr-391. At Ser-394 the chain carries Phosphoserine.

As to quaternary structure, homodimer; disulfide-linked. Interacts with P- and E-selectins, through their lectin/EGF domains. Interaction with P-selectin requires sialyl Lewis X glycan modification and tyrosine sulfation, probably on Tyr-54, for high affinity binding. Dimerization appears not to be required for P-selectin/SELP binding. Interacts with SNX20. Interacts with MSN and SYK; mediates SYK activation downstream of SELPLG. Interacts with HAVCR1. In terms of processing, displays complex, core-2, sialylated and fucosylated O-linked oligosaccharides, at least some of which appear to contain poly-N-acetyllactosamine with varying degrees of substitution. Mainly disialylated or neutral forms of the core-2 tetrasaccharide, Galbeta1--&gt;4GlcNAcbeta1--&gt;6(Galbeta1--&gt;3)GalNAcOH. The GlcN:GalN ratio is approximately 2:1 and the Man:Fuc ratio 3:5. Contains about 14% fucose with alpha-1,3 linkage present in two forms: One species is a disialylated, monofucosylated glycan, and the other, a monosialylated, trifucosylated glycan with a polylactosamine backbone. The fucosylated forms carry the Lewis antigen and are important for interaction with selectins and for functioning. No sulfated O-glycans. Some N-glycosylation. In terms of tissue distribution, highly expressed in blood, bone marrow, brain, adipose tissue, spleen, and thymus. Also expressed in heart, kidney, liver, muscle, ovary, and stomach.

It is found in the cell membrane. Functionally, a SLe(x)-type proteoglycan, which through high affinity, calcium-dependent interactions with E- and P-selectins, mediates rapid rolling of leukocytes over vascular surfaces during the initial steps in inflammation. Critical for the initial leukocyte capture. The chain is P-selectin glycoprotein ligand 1 (Selplg) from Mus musculus (Mouse).